The primary structure comprises 640 residues: 1-deoxy-D-xylulose-5-phosphate synthase (640 aa).

Residues His-79 and 120 to 122 (AHA) each bind thiamine diphosphate. Asp-151 is a binding site for Mg(2+). Thiamine diphosphate is bound by residues 152–153 (GS), Asn-180, Tyr-287, and Glu-369. Residue Asn-180 participates in Mg(2+) binding.

This sequence belongs to the transketolase family. DXPS subfamily. In terms of assembly, homodimer. The cofactor is Mg(2+). Requires thiamine diphosphate as cofactor.

It catalyses the reaction D-glyceraldehyde 3-phosphate + pyruvate + H(+) = 1-deoxy-D-xylulose 5-phosphate + CO2. Its pathway is metabolic intermediate biosynthesis; 1-deoxy-D-xylulose 5-phosphate biosynthesis; 1-deoxy-D-xylulose 5-phosphate from D-glyceraldehyde 3-phosphate and pyruvate: step 1/1. Catalyzes the acyloin condensation reaction between C atoms 2 and 3 of pyruvate and glyceraldehyde 3-phosphate to yield 1-deoxy-D-xylulose-5-phosphate (DXP). The sequence is that of 1-deoxy-D-xylulose-5-phosphate synthase from Hyphomonas neptunium (strain ATCC 15444).